The sequence spans 74 residues: uncharacterized protein (74 aa).

Residues 8 to 30 form a helical membrane-spanning segment; the sequence is LAAAVSSSAASAGVSRIAASAMA.

Its subcellular location is the mitochondrion outer membrane. This is an uncharacterized protein from Saccharomyces cerevisiae (strain ATCC 204508 / S288c) (Baker's yeast).